Here is a 342-residue protein sequence, read N- to C-terminus: Sesquiterpene synthase MBR_09977 (342 aa).

Positions 91 and 96 each coordinate Mg(2+). A DDXXXD motif motif is present at residues 91–96 (DDLFVD). Arg184 provides a ligand contact to substrate. Mg(2+) is bound by residues Asn230, Ser234, and Glu238.

Belongs to the terpene synthase family. Requires Mg(2+) as cofactor.

The enzyme catalyses (2E,6E)-farnesyl diphosphate + H2O = (+)-corvol ether B + diphosphate. The catalysed reaction is (2E,6E)-farnesyl diphosphate + H2O = (+)-corvol ether A + diphosphate. Its function is as follows. Terpene synthase that catalyzes the conversion of (2E,6E)-farnesyl diphosphate (FPP) into sesquiterpenes which are important for fungi-environment interactions. Produces a mixture consisting of 8 sesquiterpenes including corvol ethers A and B, as well as traces of epizonarene, gamma-cadinene, delta-cadinene, alpha-cadinene, alpha-cadinol, and an unidentified sesquiterpene. The major product is corvol ether A. The sequence is that of Sesquiterpene synthase MBR_09977 from Metarhizium brunneum (strain ARSEF 3297).